A 253-amino-acid polypeptide reads, in one-letter code: Small ribosomal subunit protein uS3 (253 aa).

Positions 38–106 constitute a KH type-2 domain; the sequence is IRKYIHARLS…EVQINIFEIK (69 aa). Residues 216-253 are disordered; that stretch reads AGMDKKQAGQGGGKGGDSPRGDRKPFNKGGKPDARKRK. The span at 232-253 shows a compositional bias: basic and acidic residues; that stretch reads DSPRGDRKPFNKGGKPDARKRK.

It belongs to the universal ribosomal protein uS3 family. In terms of assembly, part of the 30S ribosomal subunit. Forms a tight complex with proteins S10 and S14.

In terms of biological role, binds the lower part of the 30S subunit head. Binds mRNA in the 70S ribosome, positioning it for translation. In Flavobacterium psychrophilum (strain ATCC 49511 / DSM 21280 / CIP 103535 / JIP02/86), this protein is Small ribosomal subunit protein uS3.